We begin with the raw amino-acid sequence, 201 residues long: Charged multivesicular body protein 6 (201 aa).

Gly2 carries N-myristoyl glycine lipidation. The stretch at 10-145 (QSRVTEQDKA…YQRQIDELLA (136 aa)) forms a coiled coil. The residue at position 119 (Ser119) is a Phosphoserine. Position 130 is a phosphothreonine (Thr130). The Type-2 MIT-interacting motif signature appears at 168–179 (IELPEVPSEPLP). The interaction with VPS4A stretch occupies residues 170-181 (LPEVPSEPLPEK).

It belongs to the SNF7 family. Probable core component of the endosomal sorting required for transport complex III (ESCRT-III). ESCRT-III components are thought to multimerize to form a flat lattice on the perimeter membrane of the endosome. Several assembly forms of ESCRT-III may exist that interact and act sequentially. Interacts with VPS4A; the interaction is direct. Interacts with VPS4B; the interaction is direct. Interacts with CHMP4A, CHMP4B and CHMP4C. Interacts with SNF8, VPS25 and VPS36. In terms of processing, ISGylated in a CHMP5-dependent manner. Isgylation weakens its interaction with VPS4A. As to expression, ubiquitously expressed.

It localises to the endomembrane system. It is found in the endosome membrane. The protein resides in the late endosome membrane. The protein localises to the membrane. Probable core component of the endosomal sorting required for transport complex III (ESCRT-III) which is involved in multivesicular bodies (MVBs) formation and sorting of endosomal cargo proteins into MVBs. MVBs contain intraluminal vesicles (ILVs) that are generated by invagination and scission from the limiting membrane of the endosome and mostly are delivered to lysosomes enabling degradation of membrane proteins, such as stimulated growth factor receptors, lysosomal enzymes and lipids. The MVB pathway appears to require the sequential function of ESCRT-O, -I,-II and -III complexes. ESCRT-III proteins mostly dissociate from the invaginating membrane before the ILV is released. The ESCRT machinery also functions in topologically equivalent membrane fission events, such as the terminal stages of cytokinesis and the budding of enveloped viruses (HIV-1 and other lentiviruses). ESCRT-III proteins are believed to mediate the necessary vesicle extrusion and/or membrane fission activities, possibly in conjunction with the AAA ATPase VPS4. In the ESCRT-III complex, it probably serves as an acceptor for the ESCRT-II complex on endosomal membranes. The protein is Charged multivesicular body protein 6 (CHMP6) of Homo sapiens (Human).